Reading from the N-terminus, the 235-residue chain is Type III pantothenate kinase (235 aa).

Residue 6–13 (DVGNTSLK) participates in ATP binding. Substrate-binding positions include Tyr-79 and 86-89 (GIDR). Asp-88 functions as the Proton acceptor in the catalytic mechanism. Asp-109 serves as a coordination point for K(+). An ATP-binding site is contributed by Thr-112. Thr-164 contributes to the substrate binding site.

Belongs to the type III pantothenate kinase family. As to quaternary structure, homodimer. It depends on NH4(+) as a cofactor. K(+) is required as a cofactor.

The protein localises to the cytoplasm. It catalyses the reaction (R)-pantothenate + ATP = (R)-4'-phosphopantothenate + ADP + H(+). It participates in cofactor biosynthesis; coenzyme A biosynthesis; CoA from (R)-pantothenate: step 1/5. Catalyzes the phosphorylation of pantothenate (Pan), the first step in CoA biosynthesis. The sequence is that of Type III pantothenate kinase from Pseudoalteromonas translucida (strain TAC 125).